The following is a 364-amino-acid chain: Dihydroorotate dehydrogenase (quinone) (364 aa).

Residues 62–66 (AGFDK) and threonine 86 each bind FMN. Lysine 66 serves as a coordination point for substrate. Residue 111-115 (NRMGF) participates in substrate binding. 2 residues coordinate FMN: asparagine 142 and asparagine 175. Asparagine 175 lines the substrate pocket. The active-site Nucleophile is serine 178. Asparagine 180 serves as a coordination point for substrate. Lysine 216 and threonine 244 together coordinate FMN. 245–246 (NT) contacts substrate. FMN is bound by residues glycine 267, glycine 296, and 317–318 (YT).

This sequence belongs to the dihydroorotate dehydrogenase family. Type 2 subfamily. As to quaternary structure, monomer. It depends on FMN as a cofactor.

The protein resides in the cell membrane. It catalyses the reaction (S)-dihydroorotate + a quinone = orotate + a quinol. It functions in the pathway pyrimidine metabolism; UMP biosynthesis via de novo pathway; orotate from (S)-dihydroorotate (quinone route): step 1/1. In terms of biological role, catalyzes the conversion of dihydroorotate to orotate with quinone as electron acceptor. This Anaeromyxobacter sp. (strain K) protein is Dihydroorotate dehydrogenase (quinone).